The chain runs to 241 residues: Leucyl/phenylalanyl-tRNA--protein transferase (241 aa).

This sequence belongs to the L/F-transferase family.

It localises to the cytoplasm. The enzyme catalyses N-terminal L-lysyl-[protein] + L-leucyl-tRNA(Leu) = N-terminal L-leucyl-L-lysyl-[protein] + tRNA(Leu) + H(+). It catalyses the reaction N-terminal L-arginyl-[protein] + L-leucyl-tRNA(Leu) = N-terminal L-leucyl-L-arginyl-[protein] + tRNA(Leu) + H(+). It carries out the reaction L-phenylalanyl-tRNA(Phe) + an N-terminal L-alpha-aminoacyl-[protein] = an N-terminal L-phenylalanyl-L-alpha-aminoacyl-[protein] + tRNA(Phe). Functionally, functions in the N-end rule pathway of protein degradation where it conjugates Leu, Phe and, less efficiently, Met from aminoacyl-tRNAs to the N-termini of proteins containing an N-terminal arginine or lysine. This is Leucyl/phenylalanyl-tRNA--protein transferase from Neisseria meningitidis serogroup A / serotype 4A (strain DSM 15465 / Z2491).